The chain runs to 466 residues: Reticulophagy regulator 3 (466 aa).

Residues 1–28 (MAEAEGVPTTPGPASGSTFRGRRDVSGS) are disordered. Ala-2 is modified (N-acetylalanine). The Cytoplasmic segment spans residues 2 to 80 (AEAEGVPTTP…WCLGLNAAFW (79 aa)). Thr-10 carries the post-translational modification Phosphothreonine. Ser-26 is modified (phosphoserine). A helical transmembrane segment spans residues 81 to 101 (FFALTSLRLVFLLAFGLMIIV). The Lumenal portion of the chain corresponds to 102 to 163 (CIDQWKNKIW…FIRNVLLFKK (62 aa)). Residues 164–184 (QNPGKFCLLSCGILTFLAVLG) form a helical membrane-spanning segment. The Cytoplasmic portion of the chain corresponds to 185-186 (RY). Residues 187–207 (VPGLLLSYLMLVTVMMWPLAV) traverse the membrane as a helical segment. Over 208 to 381 (YHRLWDRAYV…ASRDEAALPE (174 aa)) the chain is Lumenal. 2 positions are modified to phosphoserine: Ser-258 and Ser-260. At Thr-283 the chain carries Phosphothreonine. The disordered stretch occupies residues 284–374 (DSEHSDAEVS…EEPQAPPASR (91 aa)). Phosphoserine is present on residues Ser-285, Ser-288, Ser-293, and Ser-303. A compositionally biased stretch (polar residues) spans 294 to 310 (CTDNGTFNLSRGQTPLT). Thr-307 and Thr-310 each carry phosphothreonine. A phosphoserine mark is found at Ser-313, Ser-320, and Ser-360. The segment covering 316–331 (LDGHSDPEESFARDLP) has biased composition (basic and acidic residues). The chain crosses the membrane as a helical span at residues 382-402 (LLLGALPVGSNLTSNLASLVS). The Cytoplasmic portion of the chain corresponds to 403-466 (QGMIQLALSG…QLDPASSRSH (64 aa)). The tract at residues 412 to 466 (GASQPGPSGAPAQRATRGFLRSPSSDLDTDAEGDDFELLDQSELSQLDPASSRSH) is disordered. Positions 438–451 (LDTDAEGDDFELLD) are enriched in acidic residues. Position 440 is a phosphothreonine (Thr-440). Positions 445–450 (DDFELL) match the LIR motif motif. Residues 453-466 (SELSQLDPASSRSH) are compositionally biased toward polar residues.

The protein belongs to the RETREG family. In terms of assembly, interacts with ATG8 family modifier proteins MAP1LC3A, MAP1LC3B, MAP1LC3C, GABARAP, GABARAPL1 and GABARAPL2. Interacts with CANX. Interacts with RTN4 isoform B.

It is found in the endoplasmic reticulum membrane. Functionally, endoplasmic reticulum (ER)-anchored autophagy regulator which exists in an inactive state under basal conditions but is activated following cellular stress. When activated, induces ER fragmentation and mediates ER delivery into lysosomes through sequestration into autophagosomes via interaction with ATG8 family proteins. Promotes ER membrane curvature and ER tubulation required for subsequent ER fragmentation and engulfment into autophagosomes. Required for collagen quality control in a LIR motif-dependent manner. Mediates NRF1-enhanced neurite outgrowth. In Homo sapiens (Human), this protein is Reticulophagy regulator 3.